Here is a 492-residue protein sequence, read N- to C-terminus: Trichothecene C-15 hydroxylase (492 aa).

Residues 6 to 26 (LWPLLALSGGTGLAYLVVVVV) form a helical membrane-spanning segment. Residues 88–106 (AMKDVRGHRKSGEPEHGKD) are compositionally biased toward basic and acidic residues. Residues 88-116 (AMKDVRGHRKSGEPEHGKDPISVQSNGDN) form a disordered region. 3 N-linked (GlcNAc...) asparagine glycosylation sites follow: asparagine 124, asparagine 198, and asparagine 290. Heme is bound at residue cysteine 438.

It belongs to the cytochrome P450 family. Heme serves as cofactor.

It is found in the membrane. The protein operates within sesquiterpene biosynthesis; trichothecene biosynthesis. Its function is as follows. Trichothecene C-15 hydroxylase; part of the core gene cluster that mediates the biosynthesis of trichothecenes, a very large family of chemically related bicyclic sesquiterpene compounds acting as mycotoxins, including T2-toxin. The biosynthesis of trichothecenes begins with the cyclization of farnesyl diphosphate to trichodiene and is catalyzed by the trichodiene synthase TRI5. Trichodiene undergoes a series of oxygenations catalyzed by the cytochrome P450 monooxygenase TRI4. TRI4 controls the addition of four oxygens at C-2, C-3, C-11, and the C-12, C-13-epoxide to form the intermediate isotrichotriol. Isotrichotriol then undergoes a non-enzymatic isomerization and cyclization to form isotrichodermol. During this process, the oxygen at the C-2 position becomes the pyran ring oxygen and the hydroxyl group at C-11 is lost. More complex type A trichothecenes are built by modifying isotrichodermol through a series of paired hydroxylation and acetylation or acylation steps. Isotrichodermol is converted to isotrichodermin by the acetyltransferase TRI101. TRI101 encodes a C-3 transacetylase that acts as a self-protection or resistance factor during biosynthesis and that the presence of a free C-3 hydroxyl group is a key component of Fusarium trichothecene phytotoxicity. A second hydroxyl group is added to C-15 by the trichothecene C-15 hydroxylase TRI11, producing 15-decalonectrin, which is then acetylated by TRI3, producing calonectrin. A third hydroxyl group is added at C-4 by the cytochrome P450 monooxygenase TRI13, converting calonectrin to 3,15-diacetoxyspirpenol, which is subsequently acetylated by the acetyltransferase TRI7. A fourth hydroxyl group is added to C-8 by the cytochrome P450 monooxygenase TRI1, followed by the addition of an isovaleryl moiety by TRI16. Finally, the acetyl group is removed from the C-3 position by the trichothecene C-3 esterase TRI8 to produce T-2 toxin. This chain is Trichothecene C-15 hydroxylase, found in Fusarium sporotrichioides.